The chain runs to 357 residues: MKTLLVMAGGTGGHIFPGVAVAEQLRGRGWRIVWMGNPDGMEARIVPQHGYETAWVHFGALRGKGLLRKLLLPLNLLRGFWQALGELRRIRPDVVLGMGGYVTFPGGMMAALLGRPLVVHEQNSVAGLANRVLAGVADRVLSGFPHTLKKAGWVGNPVRADIAAVAPPDARFAGRSGPLKLLVVGGSLGAAVLNDTVPKALARIDKAQRPIVTHQAGAKQLEALRAAYAEAGVEGELLPFIDDMASRYAEADLVVCRAGALTVAELAAVGAASLLVPFPHAVDDHQTGNAQFLADRGAAYLLPQPQLDAERLAGIIESLARDHLLDMATKARALAKPRAAEAVAQVCEELAAGRKKK.

UDP-N-acetyl-alpha-D-glucosamine contacts are provided by residues 11–13, Asn-123, Arg-159, Ser-187, Ile-241, 260–265, and Gln-286; these read TGG and ALTVAE.

It belongs to the glycosyltransferase 28 family. MurG subfamily.

It is found in the cell inner membrane. The catalysed reaction is di-trans,octa-cis-undecaprenyl diphospho-N-acetyl-alpha-D-muramoyl-L-alanyl-D-glutamyl-meso-2,6-diaminopimeloyl-D-alanyl-D-alanine + UDP-N-acetyl-alpha-D-glucosamine = di-trans,octa-cis-undecaprenyl diphospho-[N-acetyl-alpha-D-glucosaminyl-(1-&gt;4)]-N-acetyl-alpha-D-muramoyl-L-alanyl-D-glutamyl-meso-2,6-diaminopimeloyl-D-alanyl-D-alanine + UDP + H(+). The protein operates within cell wall biogenesis; peptidoglycan biosynthesis. Cell wall formation. Catalyzes the transfer of a GlcNAc subunit on undecaprenyl-pyrophosphoryl-MurNAc-pentapeptide (lipid intermediate I) to form undecaprenyl-pyrophosphoryl-MurNAc-(pentapeptide)GlcNAc (lipid intermediate II). In Aromatoleum aromaticum (strain DSM 19018 / LMG 30748 / EbN1) (Azoarcus sp. (strain EbN1)), this protein is UDP-N-acetylglucosamine--N-acetylmuramyl-(pentapeptide) pyrophosphoryl-undecaprenol N-acetylglucosamine transferase.